The chain runs to 88 residues: Elongation factor 1-beta (88 aa).

The protein belongs to the EF-1-beta/EF-1-delta family.

Functionally, promotes the exchange of GDP for GTP in EF-1-alpha/GDP, thus allowing the regeneration of EF-1-alpha/GTP that could then be used to form the ternary complex EF-1-alpha/GTP/AAtRNA. The protein is Elongation factor 1-beta (ef1b) of Thermoplasma acidophilum (strain ATCC 25905 / DSM 1728 / JCM 9062 / NBRC 15155 / AMRC-C165).